A 278-amino-acid chain; its full sequence is Undecaprenyl-diphosphatase 2 (278 aa).

Helical transmembrane passes span 1–21 (MSII…FLPI), 38–58 (FPGF…VILY), 85–105 (FMFA…GLLL), 118–138 (FIAG…RFFV), 191–211 (SFLL…GDLL), 223–243 (PLII…IWLI), and 251–271 (LIYF…YFDH).

The protein belongs to the UppP family.

It is found in the cell membrane. The catalysed reaction is di-trans,octa-cis-undecaprenyl diphosphate + H2O = di-trans,octa-cis-undecaprenyl phosphate + phosphate + H(+). Catalyzes the dephosphorylation of undecaprenyl diphosphate (UPP). Confers resistance to bacitracin. In Halalkalibacterium halodurans (strain ATCC BAA-125 / DSM 18197 / FERM 7344 / JCM 9153 / C-125) (Bacillus halodurans), this protein is Undecaprenyl-diphosphatase 2.